The sequence spans 504 residues: Tyrosine-protein kinase HCK (504 aa).

A lipid anchor (N-myristoyl glycine) is attached at G2. C3 is lipidated: S-palmitoyl cysteine. Phosphothreonine is present on T15. Y30 carries the post-translational modification Phosphotyrosine. The span at 34–49 (PTSTIKPGPNSNNRNT) shows a compositional bias: polar residues. The tract at residues 34–53 (PTSTIKPGPNSNNRNTPGIG) is disordered. Residues 56–116 (SEDIIVVALY…PSNYVARVDS (61 aa)) form the SH3 domain. The SH2 domain occupies 122-219 (WFFKGISRKD…GLCQKLSVPC (98 aa)). T180 carries the phosphothreonine modification. The residue at position 187 (Y187) is a Phosphotyrosine. One can recognise a Protein kinase domain in the interval 240–493 (LKLEKKLGAG…YIQSVLDDFY (254 aa)). ATP-binding positions include 246–254 (LGAGQFGEV) and K268. D359 acts as the Proton acceptor in catalysis. Residue Y389 is modified to Phosphotyrosine; by autocatalysis. S440 carries the post-translational modification Phosphoserine. Phosphotyrosine is present on Y500.

The protein belongs to the protein kinase superfamily. Tyr protein kinase family. SRC subfamily. In terms of assembly, interacts with ADAM15. Interacts with FASLG. Interacts with ARRB1 and ARRB2. Interacts with FCGR1A; the interaction may be indirect. Interacts with IL6ST. Interacts (via SH3 domain) with ELMO1. Interacts (via SH3 domain) with TP73. Interacts with YAP1. Interacts with ABL1 and ITGB1, and thereby recruits ABL1 to activated ITGB1. Interacts (via SH2 domain) with FLT3 (tyrosine phosphorylated). Interacts with CBL. Interacts with VAV1, WAS and RAPGEF1. Interacts (via SH3 domain) with WDCP. Phosphorylated on several tyrosine residues. Autophosphorylated. Becomes rapidly phosphorylated upon activation of the immunoglobulin receptors FCGR1A and FCGR2A. Phosphorylation at Tyr-389 increases kinase activity. Phosphorylation at Tyr-500 inhibits kinase activity. Kinase activity is not required for phosphorylation at Tyr-500, suggesting that this site may be a target of other kinases. In terms of processing, ubiquitinated by CBL, leading to its degradation via the proteasome. Post-translationally, palmitoylation requires prior myristoylation. Palmitoylation is required for caveolar localization.

The protein localises to the cytoplasmic vesicle. The protein resides in the secretory vesicle. It is found in the cytoplasm. Its subcellular location is the cytosol. It localises to the cell membrane. The protein localises to the membrane. The protein resides in the caveola. It is found in the cell junction. Its subcellular location is the focal adhesion. It localises to the cytoskeleton. The protein localises to the golgi apparatus. The protein resides in the lysosome. It is found in the nucleus. The catalysed reaction is L-tyrosyl-[protein] + ATP = O-phospho-L-tyrosyl-[protein] + ADP + H(+). Its activity is regulated as follows. Subject to autoinhibition, mediated by intramolecular interactions involving the SH2 and SH3 domains. Kinase activity is also regulated by phosphorylation at regulatory tyrosine residues. Phosphorylation at Tyr-389 is required for optimal activity. Phosphorylation at Tyr-500 inhibits kinase activity. In terms of biological role, non-receptor tyrosine-protein kinase found in hematopoietic cells that transmits signals from cell surface receptors and plays an important role in the regulation of innate immune responses, including neutrophil, monocyte, macrophage and mast cell functions, phagocytosis, cell survival and proliferation, cell adhesion and migration. Acts downstream of receptors that bind the Fc region of immunoglobulins, such as FCGR1A and FCGR2A, but also CSF3R, PLAUR, the receptors for IFNG, IL2, IL6 and IL8, and integrins, such as ITGB1 and ITGB2. During the phagocytic process, mediates mobilization of secretory lysosomes, degranulation, and activation of NADPH oxidase to bring about the respiratory burst. Plays a role in the release of inflammatory molecules. Promotes reorganization of the actin cytoskeleton and actin polymerization, formation of podosomes and cell protrusions. Inhibits TP73-mediated transcription activation and TP73-mediated apoptosis. Phosphorylates CBL in response to activation of immunoglobulin gamma Fc region receptors. Phosphorylates ADAM15, BCR, ELMO1, FCGR2A, GAB1, GAB2, RAPGEF1, STAT5B, TP73, VAV1 and WAS. In Macaca fascicularis (Crab-eating macaque), this protein is Tyrosine-protein kinase HCK (HCK).